The sequence spans 207 residues: Porin MspD (207 aa).

Positions 1–24 (MRYLVMMFALLVSVTLVSPRPANA) are cleaved as a signal peptide.

Belongs to the mycobacterial porin (TC 1.B.24) family. As to quaternary structure, octamers. Probably forms a goblet with the wide end on the exterior of the outer membrane and a central channel. It is not known if mixed oligomers of MspD with other Msp subunits form in vivo.

It localises to the cell outer membrane. The protein resides in the secreted. It is found in the cell wall. Functionally, a backup porin induced when MspA, the major porin, is deleted. It probably forms a water-filled channel which favors the permeation of cations. There are about 2400 porins in wild-type, 800 in an mspA deletion and 150 in a double mspA-mspC deletion. The sequence is that of Porin MspD (mspD) from Mycolicibacterium smegmatis (strain ATCC 700084 / mc(2)155) (Mycobacterium smegmatis).